We begin with the raw amino-acid sequence, 357 residues long: DNA replication and repair protein RecF (357 aa).

An ATP-binding site is contributed by 30–37; it reads GANGSGKT.

Belongs to the RecF family.

The protein localises to the cytoplasm. Its function is as follows. The RecF protein is involved in DNA metabolism; it is required for DNA replication and normal SOS inducibility. RecF binds preferentially to single-stranded, linear DNA. It also seems to bind ATP. The sequence is that of DNA replication and repair protein RecF from Escherichia coli O7:K1 (strain IAI39 / ExPEC).